We begin with the raw amino-acid sequence, 162 residues long: NADH-quinone oxidoreductase subunit I (162 aa).

2 consecutive 4Fe-4S ferredoxin-type domains span residues Arg-54–Glu-83 and Thr-93–Ile-122. The [4Fe-4S] cluster site is built by Cys-63, Cys-66, Cys-69, Cys-73, Cys-102, Cys-105, Cys-108, and Cys-112.

Belongs to the complex I 23 kDa subunit family. NDH-1 is composed of 14 different subunits. Subunits NuoA, H, J, K, L, M, N constitute the membrane sector of the complex. Requires [4Fe-4S] cluster as cofactor.

It is found in the cell inner membrane. It carries out the reaction a quinone + NADH + 5 H(+)(in) = a quinol + NAD(+) + 4 H(+)(out). NDH-1 shuttles electrons from NADH, via FMN and iron-sulfur (Fe-S) centers, to quinones in the respiratory chain. The immediate electron acceptor for the enzyme in this species is believed to be ubiquinone. Couples the redox reaction to proton translocation (for every two electrons transferred, four hydrogen ions are translocated across the cytoplasmic membrane), and thus conserves the redox energy in a proton gradient. The polypeptide is NADH-quinone oxidoreductase subunit I (Burkholderia ambifaria (strain MC40-6)).